The primary structure comprises 517 residues: UDP-N-acetylmuramyl-tripeptide synthetase (517 aa).

UDP-N-acetyl-alpha-D-muramoyl-L-alanyl-D-glutamate is bound at residue serine 38. ATP is bound at residue 116–122 (GTKGKTT). UDP-N-acetyl-alpha-D-muramoyl-L-alanyl-D-glutamate is bound by residues asparagine 160, 162–163 (TT), serine 189, and arginine 197. Position 231 is an N6-carboxylysine (lysine 231).

This sequence belongs to the MurCDEF family. MurE subfamily. Post-translationally, carboxylation is probably crucial for Mg(2+) binding and, consequently, for the gamma-phosphate positioning of ATP.

It is found in the cytoplasm. The protein operates within cell wall biogenesis; peptidoglycan biosynthesis. Its function is as follows. Catalyzes the addition of an amino acid to the nucleotide precursor UDP-N-acetylmuramoyl-L-alanyl-D-glutamate (UMAG) in the biosynthesis of bacterial cell-wall peptidoglycan. The protein is UDP-N-acetylmuramyl-tripeptide synthetase of Lacticaseibacillus paracasei (strain ATCC 334 / BCRC 17002 / CCUG 31169 / CIP 107868 / KCTC 3260 / NRRL B-441) (Lactobacillus paracasei).